A 448-amino-acid chain; its full sequence is Ribosome biogenesis protein YTM1 (448 aa).

The segment at 5–86 is ubiquitin-like (UBL) domain; that stretch reads TSNQAVVFST…EETLEIEYIE (82 aa). WD repeat units lie at residues 98–136, 191–230, 271–309, 312–351, 357–397, and 403–439; these read PHES…TLDA, LHTA…KHEV, SHIG…CTRT, ASEK…ALSA, LHPA…AAIS, and DGTK…ETQG. Residues 225-261 form a disordered region; it reads PPKHEVPEPTITAADQRTKKRRKVDPSSGDSSSPTAI.

The protein belongs to the WD repeat WDR12/YTM1 family. Component of the NOP7 complex, composed of ERB1, NOP7 and YTM1. The complex is held together by ERB1, which interacts with NOP7 via its N-terminal domain and with YTM1 via a high-affinity interaction between the seven-bladed beta-propeller domains of the 2 proteins. The NOP7 complex associates with the 66S pre-ribosome. Interacts (via UBL domain) with MDN1 (via VWFA/MIDAS domain).

The protein resides in the nucleus. Its subcellular location is the nucleolus. It is found in the nucleoplasm. In terms of biological role, component of the NOP7 complex, which is required for maturation of the 25S and 5.8S ribosomal RNAs and formation of the 60S ribosome. This is Ribosome biogenesis protein YTM1 from Coprinopsis cinerea (strain Okayama-7 / 130 / ATCC MYA-4618 / FGSC 9003) (Inky cap fungus).